The following is a 496-amino-acid chain: Probable cytosol aminopeptidase (496 aa).

Lys266 and Asp271 together coordinate Mn(2+). Residue Lys278 is part of the active site. Asp289, Asp348, and Glu350 together coordinate Mn(2+). Arg352 is a catalytic residue.

This sequence belongs to the peptidase M17 family. Mn(2+) serves as cofactor.

It is found in the cytoplasm. The catalysed reaction is Release of an N-terminal amino acid, Xaa-|-Yaa-, in which Xaa is preferably Leu, but may be other amino acids including Pro although not Arg or Lys, and Yaa may be Pro. Amino acid amides and methyl esters are also readily hydrolyzed, but rates on arylamides are exceedingly low.. It carries out the reaction Release of an N-terminal amino acid, preferentially leucine, but not glutamic or aspartic acids.. Functionally, presumably involved in the processing and regular turnover of intracellular proteins. Catalyzes the removal of unsubstituted N-terminal amino acids from various peptides. The chain is Probable cytosol aminopeptidase from Stutzerimonas stutzeri (strain A1501) (Pseudomonas stutzeri).